Reading from the N-terminus, the 172-residue chain is Adenylate kinase isoenzyme 6 (172 aa).

The ATP site is built by glycine 13, glycine 15, lysine 16, threonine 17, and threonine 18. Positions 33 to 56 (NVGDLAREGHLYDGYDEEYGCPIL) are NMPbind. The segment at 108–118 (TRGYHEKKLQD) is LID. Arginine 109 lines the ATP pocket.

It belongs to the adenylate kinase family. AK6 subfamily. Monomer and homodimer. Interacts with small ribosomal subunit protein uS11. Not a structural component of 43S pre-ribosomes, but transiently interacts with them by binding to uS11. Interacts with COIL (via C-terminus).

Its subcellular location is the cytoplasm. The protein localises to the nucleus. It is found in the nucleoplasm. The protein resides in the cajal body. The catalysed reaction is AMP + ATP = 2 ADP. It catalyses the reaction ATP + H2O = ADP + phosphate + H(+). Its function is as follows. Broad-specificity nucleoside monophosphate (NMP) kinase that catalyzes the reversible transfer of the terminal phosphate group between nucleoside triphosphates and monophosphates. Also has ATPase activity. Involved in the late cytoplasmic maturation steps of the 40S ribosomal particles, specifically 18S rRNA maturation. While NMP activity is not required for ribosome maturation, ATPase activity is. Associates transiently with small ribosomal subunit protein uS11. ATP hydrolysis breaks the interaction with uS11. May temporarily remove uS11 from the ribosome to enable a conformational change of the ribosomal RNA that is needed for the final maturation step of the small ribosomal subunit. Its NMP activity may have a role in nuclear energy homeostasis. May be involved in regulation of Cajal body (CB) formation. This chain is Adenylate kinase isoenzyme 6, found in Rattus norvegicus (Rat).